The chain runs to 120 residues: Small ribosomal subunit protein uS12c (120 aa).

This sequence belongs to the universal ribosomal protein uS12 family. Part of the 30S ribosomal subunit.

The protein resides in the plastid. Its subcellular location is the apicoplast. Functionally, with S4 and S5 plays an important role in translational accuracy. Located at the interface of the 30S and 50S subunits. The chain is Small ribosomal subunit protein uS12c (rps12) from Eimeria tenella (Coccidian parasite).